The primary structure comprises 185 residues: uncharacterized protein (185 aa).

The next 5 membrane-spanning stretches (helical) occupy residues 4–24 (TYLTGYFPLIAILLFSSSLSI), 54–74 (LALFAAFALLYFMVLSALKLI), 98–118 (LRMGSMIYLGGGILSFVLLQN), 119–139 (VIWIVIWFAVVTLAYFVFTVY), and 153–173 (FILLELLFWFTFVIGILFIFI).

Its subcellular location is the cell membrane. This is an uncharacterized protein from Bacillus subtilis (strain 168).